Reading from the N-terminus, the 298-residue chain is Acetylglutamate kinase (298 aa).

Substrate is bound by residues 67-68 (GG), Arg-89, and Asn-193.

Belongs to the acetylglutamate kinase family. ArgB subfamily.

It localises to the cytoplasm. It catalyses the reaction N-acetyl-L-glutamate + ATP = N-acetyl-L-glutamyl 5-phosphate + ADP. It functions in the pathway amino-acid biosynthesis; L-arginine biosynthesis; N(2)-acetyl-L-ornithine from L-glutamate: step 2/4. In terms of biological role, catalyzes the ATP-dependent phosphorylation of N-acetyl-L-glutamate. The polypeptide is Acetylglutamate kinase (Desulfitobacterium hafniense (strain DSM 10664 / DCB-2)).